A 586-amino-acid chain; its full sequence is Serine/threonine-protein kinase TDA1 (586 aa).

The segment at 1-26 (MTTASSSASQLQQRLPEEKPWPQLSG) is disordered. A Protein kinase domain is found at 39 to 351 (VTNHNSLGDG…AKNLKQHPFI (313 aa)). Residues 45–53 (LGDGNFSVV) and lysine 68 contribute to the ATP site. The active-site Proton acceptor is aspartate 180. Positions 503 to 524 (TTPESRSNFNTPKTLSRQGSST) are disordered. Threonine 504 carries the post-translational modification Phosphothreonine. Phosphoserine occurs at positions 509 and 518. Threonine 538 is subject to Phosphothreonine. Serine 578 is modified (phosphoserine).

This sequence belongs to the protein kinase superfamily. Ser/Thr protein kinase family. In terms of assembly, interacts with RIM11.

The protein localises to the cytoplasm. The protein resides in the nucleus. The enzyme catalyses L-seryl-[protein] + ATP = O-phospho-L-seryl-[protein] + ADP + H(+). It carries out the reaction L-threonyl-[protein] + ATP = O-phospho-L-threonyl-[protein] + ADP + H(+). Its function is as follows. Serine/threonine protein kinase shown to have protein phosphorylation activity in vitro. In Saccharomyces cerevisiae (strain ATCC 204508 / S288c) (Baker's yeast), this protein is Serine/threonine-protein kinase TDA1 (TDA1).